Reading from the N-terminus, the 414-residue chain is Histidinol dehydrogenase (414 aa).

NAD(+) is bound by residues tyrosine 116, glutamine 177, and asparagine 200. Threonine 223, glutamine 245, and histidine 248 together coordinate substrate. Zn(2+) contacts are provided by glutamine 245 and histidine 248. Catalysis depends on proton acceptor residues glutamate 313 and histidine 314. The substrate site is built by histidine 314, aspartate 347, glutamate 401, and histidine 406. A Zn(2+)-binding site is contributed by aspartate 347. A Zn(2+)-binding site is contributed by histidine 406.

The protein belongs to the histidinol dehydrogenase family. Requires Zn(2+) as cofactor.

The catalysed reaction is L-histidinol + 2 NAD(+) + H2O = L-histidine + 2 NADH + 3 H(+). The protein operates within amino-acid biosynthesis; L-histidine biosynthesis; L-histidine from 5-phospho-alpha-D-ribose 1-diphosphate: step 9/9. Its function is as follows. Catalyzes the sequential NAD-dependent oxidations of L-histidinol to L-histidinaldehyde and then to L-histidine. This is Histidinol dehydrogenase from Staphylococcus epidermidis (strain ATCC 12228 / FDA PCI 1200).